A 150-amino-acid chain; its full sequence is UPF0178 protein BceJ2315_16760 (150 aa).

The protein belongs to the UPF0178 family.

The polypeptide is UPF0178 protein BceJ2315_16760 (Burkholderia cenocepacia (strain ATCC BAA-245 / DSM 16553 / LMG 16656 / NCTC 13227 / J2315 / CF5610) (Burkholderia cepacia (strain J2315))).